Consider the following 563-residue polypeptide: DEAD-box ATP-dependent RNA helicase 25 (563 aa).

The interval 21–57 (KKLTSDEDGSGKLVKDNNKSLKRGREGKSDVDEPLIK) is disordered. The segment covering 23 to 56 (LTSDEDGSGKLVKDNNKSLKRGREGKSDVDEPLI) has biased composition (basic and acidic residues). At serine 25 the chain carries Phosphoserine. The short motif at 80 to 108 (TRFDQFPLSPLTLKGIEDAGFKTMTVVQE) is the Q motif element. Positions 111–294 (LPLILQGKDI…HVALKRDHEF (184 aa)) constitute a Helicase ATP-binding domain. 124–131 (AKTGTGKT) lines the ATP pocket. The DEAD box motif lies at 242-245 (DEAD). The Helicase C-terminal domain maps to 328-479 (LLKKHITDNV…AVKKVQKGLI (152 aa)).

This sequence belongs to the DEAD box helicase family.

The catalysed reaction is ATP + H2O = ADP + phosphate + H(+). The chain is DEAD-box ATP-dependent RNA helicase 25 (RH25) from Arabidopsis thaliana (Mouse-ear cress).